Here is a 175-residue protein sequence, read N- to C-terminus: MSTGSNTKRYETPNHPYQGERIAQEGDLLGRYGLKNKEELWRTQSELREYRREARRLIGEAQGDVSVAEALGEEFLDRLRRYGILSADDDISKVLGLDVSDILERRLQTIVYRQGLASTPKQARQFIVHEHITVNGARVTRPSKMVEETEANAIAFDENSPLADSLHPARAEGQE.

Residues 105–169 form the S4 RNA-binding domain; it reads RRLQTIVYRQ…SPLADSLHPA (65 aa).

This sequence belongs to the universal ribosomal protein uS4 family. As to quaternary structure, part of the 30S ribosomal subunit. Contacts protein S5. The interaction surface between S4 and S5 is involved in control of translational fidelity.

Functionally, one of the primary rRNA binding proteins, it binds directly to 16S rRNA where it nucleates assembly of the body of the 30S subunit. In terms of biological role, with S5 and S12 plays an important role in translational accuracy. This Haloquadratum walsbyi (strain DSM 16790 / HBSQ001) protein is Small ribosomal subunit protein uS4.